Here is a 678-residue protein sequence, read N- to C-terminus: Secretin ExeD (678 aa).

The signal sequence occupies residues 1–25 (MINKGKGWRLATVAAALMMAGSAWA). The segment at 26-122 (TEYSASFKNA…VVDETNPGIG (97 aa)) is N0. The segment at 124-188 (EMVTRVVPVR…EVVRRVDKAG (65 aa)) is N1. Positions 189–264 (DQEVDIIKLK…MVRQLDRDLQ (76 aa)) are N2. Positions 267 to 348 (GNTRVFYLKY…ELEQVVAKLD (82 aa)) are N3. Residues 353–602 (QVLVEAIIVE…VFIRPTILRD (250 aa)) form a secretin region. Positions 604–678 (NVYSGISSNK…GVQPFVQGNK (75 aa)) are s domain.

Belongs to the bacterial secretin family. GSP D subfamily. Forms a cylindrical channel with 15 subunits.

The protein localises to the cell outer membrane. Involved in a type II secretion system (T2SS, formerly general secretion pathway, GSP) for the export of proteins. This subunit forms the outer membrane channel. The chain is Secretin ExeD (exeD) from Aeromonas hydrophila.